Consider the following 472-residue polypeptide: Alanine--anticapsin ligase (472 aa).

Glu109 contacts Mg(2+). Lys138 and Lys178 together coordinate ATP. The region spanning 142–355 (RAAFNRAGVK…MAQLLLDVLC (214 aa)) is the ATP-grasp domain. Leu182 is a Mg(2+) binding site. Residues 184 to 185 (SS), 226 to 229 (EEFL), and Gln268 contribute to the ATP site. Substrate-binding positions include Glu273 and 309–311 (HTE). Residues Glu311 and Glu324 each contribute to the Mg(2+) site. 328 to 331 (RFAG) provides a ligand contact to substrate.

Monomer or homodimer. Requires Mg(2+) as cofactor.

It carries out the reaction L-anticapsin + L-alanine + ATP = bacilysin + ADP + phosphate + H(+). It functions in the pathway antibiotic biosynthesis; bacilysin biosynthesis. Its function is as follows. Part of the bacABCDEFG operon responsible for the biosynthesis of bacilysin, an irreversible inactivator of the glutaminase domain of glucosamine synthetase. Catalyzes the formation of alpha-dipeptides from various L-amino acids in the presence of ATP. In vivo catalyzes the ligation of L-alanine and L-anticapsin (epoxycyclohexanonyl-Ala) to produce the final bacilysin antibiotic (L-Ala-L-4S-cyclohexenonyl-Ala dipeptide). This Bacillus subtilis protein is Alanine--anticapsin ligase.